Reading from the N-terminus, the 121-residue chain is Large ribosomal subunit protein uL22 (121 aa).

The protein belongs to the universal ribosomal protein uL22 family. Part of the 50S ribosomal subunit.

In terms of biological role, this protein binds specifically to 23S rRNA; its binding is stimulated by other ribosomal proteins, e.g. L4, L17, and L20. It is important during the early stages of 50S assembly. It makes multiple contacts with different domains of the 23S rRNA in the assembled 50S subunit and ribosome. The globular domain of the protein is located near the polypeptide exit tunnel on the outside of the subunit, while an extended beta-hairpin is found that lines the wall of the exit tunnel in the center of the 70S ribosome. The sequence is that of Large ribosomal subunit protein uL22 from Hydrogenobaculum sp. (strain Y04AAS1).